The chain runs to 170 residues: 2-oxo-4-hydroxy-4-carboxy-5-ureidoimidazoline decarboxylase (170 aa).

The active-site Proton donor is the histidine 67. Substrate is bound by residues proline 68, 84–88, and 119–123; these read SQREQ and FVLAL.

Belongs to the OHCU decarboxylase family.

The protein localises to the peroxisome. It catalyses the reaction 5-hydroxy-2-oxo-4-ureido-2,5-dihydro-1H-imidazole-5-carboxylate + H(+) = (S)-allantoin + CO2. Its pathway is purine metabolism; urate degradation; (S)-allantoin from urate: step 3/3. Its function is as follows. Catalyzes the stereoselective decarboxylation of 2-oxo-4-hydroxy-4-carboxy-5-ureidoimidazoline (OHCU) to (S)-allantoin. This is 2-oxo-4-hydroxy-4-carboxy-5-ureidoimidazoline decarboxylase (URAD) from Bos taurus (Bovine).